We begin with the raw amino-acid sequence, 224 residues long: Octanoyl-[acyl-carrier-protein]:protein N-octanoyltransferase LIPT2, mitochondrial (224 aa).

The 181-residue stretch at 37-217 folds into the BPL/LPL catalytic domain; that stretch reads SNIPNTLLLC…AFTEQFNCTL (181 aa). Substrate-binding positions include 81-88, 147-149, and 160-162; these read RGGLITFH, AIG, and GLA. Cysteine 178 acts as the Acyl-thioester intermediate in catalysis.

The protein belongs to the LipB family.

The protein localises to the mitochondrion. The catalysed reaction is octanoyl-[ACP] + L-lysyl-[protein] = N(6)-octanoyl-L-lysyl-[protein] + holo-[ACP] + H(+). It participates in protein modification; protein lipoylation via endogenous pathway; protein N(6)-(lipoyl)lysine from octanoyl-[acyl-carrier-protein]: step 1/2. Its function is as follows. Catalyzes the transfer of endogenously produced octanoic acid from octanoyl-acyl-carrier-protein (octanoyl-ACP) onto the lipoyl domains of lipoate-dependent enzymes such as the protein H of the glycine cleavage system (GCSH). Lipoyl-ACP can also act as a substrate although octanoyl-ACP is likely to be the physiological substrate. This Danio rerio (Zebrafish) protein is Octanoyl-[acyl-carrier-protein]:protein N-octanoyltransferase LIPT2, mitochondrial (lipt2).